We begin with the raw amino-acid sequence, 208 residues long: Uracil phosphoribosyltransferase (208 aa).

5-phospho-alpha-D-ribose 1-diphosphate-binding positions include arginine 78, arginine 103, and 130–138 (DPMLATGGS). Residues isoleucine 193 and 198 to 200 (GDA) each bind uracil. Aspartate 199 is a binding site for 5-phospho-alpha-D-ribose 1-diphosphate.

It belongs to the UPRTase family. Mg(2+) serves as cofactor.

The enzyme catalyses UMP + diphosphate = 5-phospho-alpha-D-ribose 1-diphosphate + uracil. Its pathway is pyrimidine metabolism; UMP biosynthesis via salvage pathway; UMP from uracil: step 1/1. Its activity is regulated as follows. Allosterically activated by GTP. In terms of biological role, catalyzes the conversion of uracil and 5-phospho-alpha-D-ribose 1-diphosphate (PRPP) to UMP and diphosphate. This chain is Uracil phosphoribosyltransferase, found in Glaesserella parasuis serovar 5 (strain SH0165) (Haemophilus parasuis).